The chain runs to 274 residues: MKKTQTWIITCIYLQLLLFNPLVKTKGICENRVTDDVKDVTKLVANLPKDYKITLKYVPGMDVLPSHCWISEMVQHLSVSLTDLLEKFSNISEGLSNYSIIDKLVKIVDDLVECMEEHSSENVKKSYKSQESRLFTPEEFFRIFNRSIDAFKDLEMVVSKTSECVVSSTLSPEKDSRVSVTKPFMLPPVAASSLRNDSSSSNRKASNFTGDSNLQWAAMALPAFFSLVIGFAFGALYWKKKQPNLTRAVENIQINEEDNEISMLQEKEREFQEV.

A signal peptide spans Met1–Thr25. The Extracellular portion of the chain corresponds to Lys26 to Gln215. 2 cysteine pairs are disulfide-bonded: Cys29-Cys114 and Cys68-Cys164. N-linked (GlcNAc...) asparagine glycosylation is found at Asn90, Asn97, Asn145, Asn196, and Asn207. The chain crosses the membrane as a helical span at residues Trp216 to Trp238. Topologically, residues Lys239–Val274 are cytoplasmic.

The protein belongs to the SCF family. In terms of assembly, homodimer, non-covalently linked. Post-translationally, a soluble form is produced by proteolytic processing of the extracellular domain.

It localises to the cytoplasm. It is found in the cytoskeleton. Its subcellular location is the cell membrane. The protein resides in the cell projection. The protein localises to the lamellipodium. It localises to the filopodium. It is found in the secreted. Stimulates the proliferation of mast cells. Able to augment the proliferation of both myeloid and lymphoid hematopoietic progenitors in bone marrow culture. Also mediates cell-cell adhesion. Acts synergistically with other cytokines, probably interleukins. This is Kit ligand (KITLG) from Equus caballus (Horse).